Here is a 263-residue protein sequence, read N- to C-terminus: 3'-5' ssDNA/RNA exonuclease TatD (263 aa).

Residues E91, H127, and H152 each coordinate a divalent metal cation.

The protein belongs to the metallo-dependent hydrolases superfamily. TatD-type hydrolase family. TatD subfamily. Monomer. It depends on Mg(2+) as a cofactor.

The protein resides in the cytoplasm. Its function is as follows. 3'-5' exonuclease that prefers single-stranded DNA and RNA. May play a role in the H(2)O(2)-induced DNA damage repair. The chain is 3'-5' ssDNA/RNA exonuclease TatD from Klebsiella pneumoniae (strain 342).